The sequence spans 230 residues: TPR repeat-containing protein BB_0298 (230 aa).

TPR repeat units follow at residues 69–102 (ARFF…NPNN) and 183–216 (FEFL…ASTE).

This is TPR repeat-containing protein BB_0298 from Borreliella burgdorferi (strain ATCC 35210 / DSM 4680 / CIP 102532 / B31) (Borrelia burgdorferi).